Here is a 580-residue protein sequence, read N- to C-terminus: Probable mediator of RNA polymerase II transcription subunit 26a (580 aa).

A TFIIS N-terminal domain is found at 108 to 183 (DEVMRIRDIL…AEWKRLVDQW (76 aa)). Basic and acidic residues-rich tracts occupy residues 244-255 (RHSVESKHERKS), 280-290 (QTRREEADVRP), and 299-309 (VEPKRQTKQSR). The tract at residues 244-337 (RHSVESKHER…RKLAGPQQDK (94 aa)) is disordered. Residues 347 to 368 (FEFAKRKLQESYHQHENAKRQR) adopt a coiled-coil conformation.

The protein belongs to the Mediator complex subunit 26 family. In terms of assembly, component of the Mediator complex.

It is found in the nucleus. Component of the Mediator complex, a coactivator involved in the regulated transcription of nearly all RNA polymerase II-dependent genes. Mediator functions as a bridge to convey information from gene-specific regulatory proteins to the basal RNA polymerase II transcription machinery. The Mediator complex, having a compact conformation in its free form, is recruited to promoters by direct interactions with regulatory proteins and serves for the assembly of a functional preinitiation complex with RNA polymerase II and the general transcription factors. May play a role in transcription elongation. This Arabidopsis thaliana (Mouse-ear cress) protein is Probable mediator of RNA polymerase II transcription subunit 26a (MED26A).